We begin with the raw amino-acid sequence, 208 residues long: dTTP/UTP pyrophosphatase (208 aa).

The Proton acceptor role is filled by Asp-79.

It belongs to the Maf family. YhdE subfamily. The cofactor is a divalent metal cation.

The protein localises to the cytoplasm. It catalyses the reaction dTTP + H2O = dTMP + diphosphate + H(+). The enzyme catalyses UTP + H2O = UMP + diphosphate + H(+). Nucleoside triphosphate pyrophosphatase that hydrolyzes dTTP and UTP. May have a dual role in cell division arrest and in preventing the incorporation of modified nucleotides into cellular nucleic acids. In Mesorhizobium japonicum (strain LMG 29417 / CECT 9101 / MAFF 303099) (Mesorhizobium loti (strain MAFF 303099)), this protein is dTTP/UTP pyrophosphatase.